The sequence spans 474 residues: Glutamine synthetase (474 aa).

One can recognise a GS beta-grasp domain in the interval 14–99 (EKIELIDLKF…VCSIKEPRTG (86 aa)). The region spanning 106–474 (PRVIAQKAID…PYEFSIYYDV (369 aa)) is the GS catalytic domain. Residues E131 and E133 each coordinate Mg(2+). E211 lines the ATP pocket. The Mg(2+) site is built by E216 and E224. Residues 268-269 (NG) and G269 each bind L-glutamate. Residue H273 coordinates Mg(2+). Residues 275-277 (HQS) and S277 contribute to the ATP site. Residues R325, E331, and R343 each contribute to the L-glutamate site. ATP-binding residues include R343, R348, and K357. Residue E362 participates in Mg(2+) binding. R364 contacts L-glutamate. O-AMP-tyrosine is present on Y402.

This sequence belongs to the glutamine synthetase family. As to quaternary structure, oligomer of 12 subunits arranged in the form of two hexagons. Mg(2+) serves as cofactor.

The protein resides in the cytoplasm. It catalyses the reaction L-glutamate + NH4(+) + ATP = L-glutamine + ADP + phosphate + H(+). With respect to regulation, the activity of this enzyme could be controlled by adenylation under conditions of abundant glutamine. Involved in nitrogen metabolism via ammonium assimilation. Catalyzes the ATP-dependent biosynthesis of glutamine from glutamate and ammonia. This is Glutamine synthetase from Nostoc sp. (strain PCC 7120 / SAG 25.82 / UTEX 2576).